Consider the following 71-residue polypeptide: uncharacterized protein (71 aa).

This is an uncharacterized protein from Methanocaldococcus jannaschii (strain ATCC 43067 / DSM 2661 / JAL-1 / JCM 10045 / NBRC 100440) (Methanococcus jannaschii).